The primary structure comprises 128 residues: Histone H2A (128 aa).

Residues 1–22 (MSGRGKTGGKARAKAKTRSSRA) are disordered. S2 is modified (N-acetylserine). S2 bears the Phosphoserine mark. K6 carries the post-translational modification N6-(2-hydroxyisobutyryl)lysine. N6-acetyllysine is present on K6. The span at 7-19 (TGGKARAKAKTRS) shows a compositional bias: basic residues. Position 10 is an N6-(2-hydroxyisobutyryl)lysine; alternate (K10). N6-lactoyllysine; alternate is present on K10. N6-succinyllysine is present on K10. Residues K14 and K16 each participate in a glycyl lysine isopeptide (Lys-Gly) (interchain with G-Cter in ubiquitin) cross-link. An N6-(2-hydroxyisobutyryl)lysine; alternate modification is found at K37. Residues K75 and K76 each carry the N6-(2-hydroxyisobutyryl)lysine modification. At K96 the chain carries N6-(2-hydroxyisobutyryl)lysine; alternate. The residue at position 96 (K96) is an N6-succinyllysine. K96 carries the N6-glutaryllysine; alternate modification. Position 105 is an N5-methylglutamine (Q105). Residue K119 is modified to N6-(2-hydroxyisobutyryl)lysine; alternate. N6-glutaryllysine; alternate occurs at positions 119, 120, and 126. K120 is covalently cross-linked (Glycyl lysine isopeptide (Lys-Gly) (interchain with G-Cter in ubiquitin)).

As to quaternary structure, the nucleosome is a histone octamer containing two molecules each of H2A, H2B, H3 and H4 assembled in one H3-H4 heterotetramer and two H2A-H2B heterodimers. The octamer wraps approximately 147 bp of DNA. Monoubiquitination of Lys-120 (H2AK119Ub) gives a specific tag for epigenetic transcriptional repression. Following DNA double-strand breaks (DSBs), it is ubiquitinated through 'Lys-63' linkage of ubiquitin moieties, leading to the recruitment of repair proteins to sites of DNA damage. H2AK119Ub and ionizing radiation-induced 'Lys-63'-linked ubiquitination are distinct events. Post-translationally, phosphorylation on Ser-2 is enhanced during mitosis. Phosphorylation on Ser-2 directly represses transcription. In terms of processing, glutamine methylation at Gln-105 (H2AQ104me) by FBL is specifically dedicated to polymerase I. It is present at 35S ribosomal DNA locus and impairs binding of the FACT complex. Expressed and secreted by skin epithelium.

It localises to the nucleus. The protein resides in the chromosome. In terms of biological role, core component of nucleosome. Nucleosomes wrap and compact DNA into chromatin, limiting DNA accessibility to the cellular machineries which require DNA as a template. Histones thereby play a central role in transcription regulation, DNA repair, DNA replication and chromosomal stability. DNA accessibility is regulated via a complex set of post-translational modifications of histones, also called histone code, and nucleosome remodeling. Its function is as follows. The secreted form has antibacterial activity against Gram-positive bacteria and antifungal activity against S.cerevisiae. This is Histone H2A from Oncorhynchus mykiss (Rainbow trout).